We begin with the raw amino-acid sequence, 465 residues long: tRNA modification GTPase MnmE (465 aa).

Arg-21, Glu-85, and Lys-124 together coordinate (6S)-5-formyl-5,6,7,8-tetrahydrofolate. The TrmE-type G domain maps to Gly-220–His-387. Position 230 (Asn-230) interacts with K(+). GTP is bound by residues Asn-230–Thr-235, Ser-249–Thr-255, and Asp-274–Gly-277. A Mg(2+)-binding site is contributed by Ser-234. Residues Ser-249, Ile-251, and Thr-254 each contribute to the K(+) site. Thr-255 lines the Mg(2+) pocket. Lys-465 serves as a coordination point for (6S)-5-formyl-5,6,7,8-tetrahydrofolate.

This sequence belongs to the TRAFAC class TrmE-Era-EngA-EngB-Septin-like GTPase superfamily. TrmE GTPase family. As to quaternary structure, homodimer. Heterotetramer of two MnmE and two MnmG subunits. Requires K(+) as cofactor.

Its subcellular location is the cytoplasm. Its function is as follows. Exhibits a very high intrinsic GTPase hydrolysis rate. Involved in the addition of a carboxymethylaminomethyl (cmnm) group at the wobble position (U34) of certain tRNAs, forming tRNA-cmnm(5)s(2)U34. The protein is tRNA modification GTPase MnmE of Bacteroides fragilis (strain YCH46).